Reading from the N-terminus, the 85-residue chain is MTILASISSIGNIKSSSKSNIASFSSSSLQSLNSIQCCSCSPALGNTVGNLVGGVLFGTGVIVGSVLNTVGNITTPILHPDCGCN.

Belongs to the hssA/B family.

The polypeptide is HssA/B-like protein 59 (hssl59) (Dictyostelium discoideum (Social amoeba)).